A 238-amino-acid chain; its full sequence is Orotidine 5'-phosphate decarboxylase (238 aa).

Substrate-binding positions include D18, K40, 67–76, T122, R183, Q192, and R213; that span reads DMKLLDIDNT. Catalysis depends on K69, which acts as the Proton donor.

Belongs to the OMP decarboxylase family. Type 1 subfamily. In terms of assembly, homodimer.

The catalysed reaction is orotidine 5'-phosphate + H(+) = UMP + CO2. The protein operates within pyrimidine metabolism; UMP biosynthesis via de novo pathway; UMP from orotate: step 2/2. Functionally, catalyzes the decarboxylation of orotidine 5'-monophosphate (OMP) to uridine 5'-monophosphate (UMP). This is Orotidine 5'-phosphate decarboxylase from Brucella melitensis biotype 2 (strain ATCC 23457).